Consider the following 540-residue polypeptide: Na(+)/H(+) antiporter NhaS2 (540 aa).

10 helical membrane passes run 29–49 (ITTL…VALV), 71–91 (GLSV…ILIF), 117–137 (VVIS…LAWV), 138–158 (TAAG…IAAF), 207–227 (IFVA…LCVG), 256–276 (LGVS…NLAL), 296–316 (FGVN…SILL), 323–343 (LIAI…LLYL), 358–378 (VLIA…ALPL), and 389–409 (LVFS…PWVV).

Belongs to the monovalent cation:proton antiporter 1 (CPA1) transporter (TC 2.A.36) family.

Its subcellular location is the cell membrane. Required for Na(+) uptake into the cell, especially at low external Na(+) concentrations or low Na(+)/K(+) ratios. May be part of a sodium cycle that permits re-entry of sodium into the cell. This is Na(+)/H(+) antiporter NhaS2 (nhaS2) from Synechocystis sp. (strain ATCC 27184 / PCC 6803 / Kazusa).